Reading from the N-terminus, the 563-residue chain is Phospholipase B-like protein F (563 aa).

A signal peptide spans 1-21 (MKIINSFVFIFVLLFVFNTNA). Asparagine 85, asparagine 107, asparagine 118, asparagine 121, asparagine 208, asparagine 312, and asparagine 537 each carry an N-linked (GlcNAc...) asparagine glycan.

The protein belongs to the phospholipase B-like family.

It is found in the secreted. Its function is as follows. Probable phospholipase. The protein is Phospholipase B-like protein F (plbF) of Dictyostelium discoideum (Social amoeba).